The sequence spans 348 residues: MSAVGSSNPEYVVARVRARRGSLYGDEEYRKLTRMGPAEIARFMEESSYGTEINALGSLHGGVDLIEYALNRNLAGQFDDILDWSEGSLYGLIARYLRKFDAWNVKTVIRGVYTDADQSEIEVDLIRAGEFDDRRIRRLLEADSIDAVVEVLEDTIYGDPLREAYAEYEETGVLVPLENAVDRAFYERLLSGLGNDEPTRQYEAFLKAEVDFRNAANALRLARSGADIDPAAYFIEGGELFTRGSLARLARNLDELVEYIADSQYGDELGPALRELEEANSLIAFEHATDAALLAYGDQLGTIHPVSVTPVISYILAKEREVENIRAIARGKEAGLSADEIESELVIT.

The protein belongs to the V-ATPase V0D/AC39 subunit family. In terms of assembly, has multiple subunits with at least A(3), B(3), C, D, E, F, H, I and proteolipid K(x).

The protein localises to the cell membrane. Functionally, component of the A-type ATP synthase that produces ATP from ADP in the presence of a proton gradient across the membrane. This Halorubrum lacusprofundi (strain ATCC 49239 / DSM 5036 / JCM 8891 / ACAM 34) protein is A-type ATP synthase subunit C.